The chain runs to 1097 residues: DNA-directed RNA polymerase subunit beta (1097 aa).

The tract at residues 1072-1097 is disordered; it reads QDVNPRRSTPSRPTYESLGVADYDED.

It belongs to the RNA polymerase beta chain family. In terms of assembly, in cyanobacteria the RNAP catalytic core is composed of 2 alpha, 1 beta, 1 beta', 1 gamma and 1 omega subunit. When a sigma factor is associated with the core the holoenzyme is formed, which can initiate transcription.

The enzyme catalyses RNA(n) + a ribonucleoside 5'-triphosphate = RNA(n+1) + diphosphate. In terms of biological role, DNA-dependent RNA polymerase catalyzes the transcription of DNA into RNA using the four ribonucleoside triphosphates as substrates. In Synechococcus sp. (strain WH7803), this protein is DNA-directed RNA polymerase subunit beta.